Consider the following 382-residue polypeptide: D-alanine--D-alanine ligase (382 aa).

One can recognise an ATP-grasp domain in the interval 161 to 372; sequence KVVFESAGLH…YAELIDELIH (212 aa). Position 193–248 (193–248) interacts with ATP; that stretch reads VDRLGFPVFVKPARAGSSMGISKVDSLEGLDAAIEEARRHDLKLVIEAGIVGREIE. Positions 326, 339, and 341 each coordinate Mg(2+).

The protein belongs to the D-alanine--D-alanine ligase family. The cofactor is Mg(2+). It depends on Mn(2+) as a cofactor.

Its subcellular location is the cytoplasm. The catalysed reaction is 2 D-alanine + ATP = D-alanyl-D-alanine + ADP + phosphate + H(+). It participates in cell wall biogenesis; peptidoglycan biosynthesis. Functionally, cell wall formation. In Pseudarthrobacter chlorophenolicus (strain ATCC 700700 / DSM 12829 / CIP 107037 / JCM 12360 / KCTC 9906 / NCIMB 13794 / A6) (Arthrobacter chlorophenolicus), this protein is D-alanine--D-alanine ligase.